The sequence spans 429 residues: Esterase/beta-lactamase LipL (429 aa).

Ser88 serves as the catalytic Acyl-ester intermediate.

This sequence belongs to the beta-lactamase family.

Its subcellular location is the secreted. The protein localises to the cell wall. It is found in the cell membrane. The catalysed reaction is a fatty acid ester + H2O = an aliphatic alcohol + a fatty acid + H(+). It carries out the reaction an acetyl ester + H2O = an aliphatic alcohol + acetate + H(+). The enzyme catalyses a butanoate ester + H2O = an aliphatic alcohol + butanoate + H(+). It catalyses the reaction an octanoate ester + H2O = an aliphatic alcohol + octanoate + H(+). The catalysed reaction is decanoate ester + H2O = decanoate + an aliphatic alcohol + H(+). It carries out the reaction a dodecanoate ester + H2O = an aliphatic alcohol + dodecanoate + H(+). The enzyme catalyses a tetradecanoate ester + H2O = an aliphatic alcohol + tetradecanoate + H(+). It catalyses the reaction hexadecanoate ester + H2O = an aliphatic alcohol + hexadecanoate + H(+). The catalysed reaction is octadecanoate ester + H2O = an aliphatic alcohol + octadecanoate + H(+). It carries out the reaction a hexanoate ester + H2O = an aliphatic alcohol + hexanoate + H(+). The enzyme catalyses a beta-lactam + H2O = a substituted beta-amino acid. With respect to regulation, esterase and beta-lactamase activities are inhibited by the active site residue modifiers phenylmethanesulfonylflouride (PMSF) and diethylpyrocarbonate (DEPC). Functionally, shows both esterase and beta-lactamase activities, with a much higher activity against phenyl esters than against beta-lactams. Shows esterase activity against both long-chain and short-chain p-nitrophenol (pNP) esters, with a preference for shorter chain esters. Hydrolyzes substrates containing beta-lactam ring such as nitrocefin and ampicillin. Functions as an immunogen that activates both humoral and cell-mediated responses. The sequence is that of Esterase/beta-lactamase LipL from Mycobacterium tuberculosis (strain ATCC 25618 / H37Rv).